A 172-amino-acid polypeptide reads, in one-letter code: MTKKVAIILSNEFEDIELTSPKEAIEEAGFETEIIGDTANAEVVGKHGEKVIVDVSIADAKPEDYDGLLIPGGFSPDHLRGDAEGRYGTFAKYFTKNDVPAFAICHGPQILIDTDDLNGRTLTAVLNVRKDLSNAGANVVDESVVVDKNIVTSRTPDDLDDFNREIVKQLQA.

The region spanning 3–171 (KKVAIILSNE…FNREIVKQLQ (169 aa)) is the PfpI endopeptidase domain.

The protein belongs to the peptidase C56 family.

This is an uncharacterized protein from Staphylococcus haemolyticus (strain JCSC1435).